A 454-amino-acid polypeptide reads, in one-letter code: Transcription factor efuD (454 aa).

Residues 4-111 (AKELIRITAR…NYHRAIDSIK (108 aa)) enclose the HTH TFE/IIEalpha-type domain. The segment at 327-454 (LRTDDDGAMD…DEDELEFEDI (128 aa)) is disordered. A compositionally biased stretch (acidic residues) spans 353-372 (DQDEEEEEEDDDDDEFEDVD). Polar residues predominate over residues 387–401 (SVSTPATSAQVSSTA). Residues 423-437 (APAAAASSQAAAAES) show a composition bias toward low complexity. The span at 442 to 454 (SDEDEDELEFEDI) shows a compositional bias: acidic residues.

This sequence belongs to the TFIIE alpha subunit family.

It is found in the nucleus. In terms of biological role, transcription factor; part of the gene cluster that mediates the biosynthesis of enfumafungin, a glycosylated fernene-type triterpenoid with potent antifungal activity, mediated by its interaction with beta-1,3-glucan synthase and the fungal cell wall. Is possibly responsible for the transcription regulation of one or more genes within the gene cluster. This is Transcription factor efuD from Hormonema carpetanum.